The following is a 230-amino-acid chain: Cytidylate kinase (230 aa).

12–20 contributes to the ATP binding site; sequence GPSGAGKGT.

The protein belongs to the cytidylate kinase family. Type 1 subfamily.

The protein localises to the cytoplasm. It catalyses the reaction CMP + ATP = CDP + ADP. It carries out the reaction dCMP + ATP = dCDP + ADP. This chain is Cytidylate kinase, found in Yersinia enterocolitica serotype O:8 / biotype 1B (strain NCTC 13174 / 8081).